The chain runs to 131 residues: Histone H2A.2 (131 aa).

A disordered region spans residues 1 to 22 (MSGGKGKAGSSEKASTSRSAKA). Ser2 is modified (N-acetylserine). 2 positions are modified to N6-acetyllysine: Lys5 and Lys7. At Gln105 the chain carries N5-methylglutamine. A Glycyl lysine isopeptide (Lys-Gly) (interchain with G-Cter in SUMO) cross-link involves residue Lys126. Residue Ser128 is modified to Phosphoserine. The [ST]-Q motif signature appears at 128–129 (SQ).

This sequence belongs to the histone H2A family. As to quaternary structure, the nucleosome is a histone octamer containing two molecules each of H2A, H2B, H3 and H4 assembled in one H3-H4 heterotetramer and two H2A-H2B heterodimers. The octamer wraps approximately 147 bp of DNA. In terms of processing, phosphorylated to form H2AS128ph (gamma-H2A) in response to DNA double-strand breaks (DSBs) generated by exogenous genotoxic agents and by stalled replication forks. Phosphorylation is dependent on the DNA damage checkpoint kinases MEC1/ATR and TEL1/ATM, spreads on either side of a detected DSB site and may mark the surrounding chromatin for recruitment of proteins required for DNA damage signaling and repair. Gamma-H2A is removed from the DNA prior to the strand invasion-primer extension step of the repair process and subsequently dephosphorylated. Dephosphorylation is necessary for efficient recovery from the DNA damage checkpoint. Post-translationally, acetylated by ESA1 to form H2AK4ac and H2AK7ac.

Its subcellular location is the nucleus. It is found in the chromosome. Its function is as follows. Core component of nucleosome which plays a central role in DNA double strand break (DSB) repair. Nucleosomes wrap and compact DNA into chromatin, limiting DNA accessibility to the cellular machineries which require DNA as a template. Histones thereby play a central role in transcription regulation, DNA repair, DNA replication and chromosomal stability. DNA accessibility is regulated via a complex set of post-translational modifications of histones, also called histone code, and nucleosome remodeling. In Scheffersomyces stipitis (strain ATCC 58785 / CBS 6054 / NBRC 10063 / NRRL Y-11545) (Yeast), this protein is Histone H2A.2 (HTA2).